A 1415-amino-acid chain; its full sequence is DNA-directed RNA polymerase subunit beta' (1415 aa).

Residues C72, C74, C87, and C90 each coordinate Zn(2+). Positions 463, 465, and 467 each coordinate Mg(2+). 4 residues coordinate Zn(2+): C811, C885, C892, and C895.

This sequence belongs to the RNA polymerase beta' chain family. As to quaternary structure, the RNAP catalytic core consists of 2 alpha, 1 beta, 1 beta' and 1 omega subunit. When a sigma factor is associated with the core the holoenzyme is formed, which can initiate transcription. Mg(2+) is required as a cofactor. Requires Zn(2+) as cofactor.

The catalysed reaction is RNA(n) + a ribonucleoside 5'-triphosphate = RNA(n+1) + diphosphate. Its function is as follows. DNA-dependent RNA polymerase catalyzes the transcription of DNA into RNA using the four ribonucleoside triphosphates as substrates. In Cereibacter sphaeroides (strain ATCC 17025 / ATH 2.4.3) (Rhodobacter sphaeroides), this protein is DNA-directed RNA polymerase subunit beta'.